The chain runs to 464 residues: Soluble pyridine nucleotide transhydrogenase (464 aa).

35 to 44 (DSRRQVGGNC) lines the FAD pocket.

The protein belongs to the class-I pyridine nucleotide-disulfide oxidoreductase family. The cofactor is FAD.

Its subcellular location is the cytoplasm. It carries out the reaction NAD(+) + NADPH = NADH + NADP(+). Functionally, conversion of NADPH, generated by peripheral catabolic pathways, to NADH, which can enter the respiratory chain for energy generation. The chain is Soluble pyridine nucleotide transhydrogenase from Pseudomonas putida (strain W619).